A 344-amino-acid polypeptide reads, in one-letter code: GTPase Obg (344 aa).

Residues 1–159 (MKFLDLAKVY…RTIWLRLKLI (159 aa)) form the Obg domain. The region spanning 160–326 (ADVGLLGLPN…VLRVLRARVD (167 aa)) is the OBG-type G domain. GTP contacts are provided by residues 166-173 (GLPNAGKS), 191-195 (FTTLV), 212-215 (DIPG), 279-282 (NKID), and 307-309 (SGV). 2 residues coordinate Mg(2+): serine 173 and threonine 193.

The protein belongs to the TRAFAC class OBG-HflX-like GTPase superfamily. OBG GTPase family. As to quaternary structure, monomer. It depends on Mg(2+) as a cofactor.

The protein resides in the cytoplasm. An essential GTPase which binds GTP, GDP and possibly (p)ppGpp with moderate affinity, with high nucleotide exchange rates and a fairly low GTP hydrolysis rate. Plays a role in control of the cell cycle, stress response, ribosome biogenesis and in those bacteria that undergo differentiation, in morphogenesis control. The protein is GTPase Obg of Jannaschia sp. (strain CCS1).